The primary structure comprises 148 residues: uncharacterized protein (148 aa).

The chain crosses the membrane as a helical span at residues Met7 to Leu29.

It is found in the membrane. This is an uncharacterized protein from Bacillus subtilis (strain 168).